We begin with the raw amino-acid sequence, 385 residues long: Lipid-A-disaccharide synthase 2 (385 aa).

The protein belongs to the LpxB family.

The enzyme catalyses a lipid X + a UDP-2-N,3-O-bis[(3R)-3-hydroxyacyl]-alpha-D-glucosamine = a lipid A disaccharide + UDP + H(+). Its pathway is bacterial outer membrane biogenesis; LPS lipid A biosynthesis. Functionally, condensation of UDP-2,3-diacylglucosamine and 2,3-diacylglucosamine-1-phosphate to form lipid A disaccharide, a precursor of lipid A, a phosphorylated glycolipid that anchors the lipopolysaccharide to the outer membrane of the cell. The polypeptide is Lipid-A-disaccharide synthase 2 (Legionella pneumophila (strain Paris)).